We begin with the raw amino-acid sequence, 327 residues long: Cytochrome f (327 aa).

A signal peptide spans 1–24 (MKRIGLVFCALLLLLGMGARPAAA). Heme is bound by residues Tyr25, Cys45, Cys48, and His49. Residues 293-313 (VKWLVAFLAAITITQVLLVLK) form a helical membrane-spanning segment.

Belongs to the cytochrome f family. In terms of assembly, the 4 large subunits of the cytochrome b6-f complex are cytochrome b6, subunit IV (17 kDa polypeptide, PetD), cytochrome f and the Rieske protein, while the 4 small subunits are PetG, PetL, PetM and PetN. The complex functions as a dimer. The cofactor is heme.

It localises to the cellular thylakoid membrane. In terms of biological role, component of the cytochrome b6-f complex, which mediates electron transfer between photosystem II (PSII) and photosystem I (PSI), cyclic electron flow around PSI, and state transitions. This is Cytochrome f from Synechococcus sp. (strain JA-2-3B'a(2-13)) (Cyanobacteria bacterium Yellowstone B-Prime).